Here is a 533-residue protein sequence, read N- to C-terminus: Protein translocase subunit SecD (533 aa).

6 helical membrane-spanning segments follow: residues 8 to 28 (ALLV…TFVS), 377 to 397 (IVGG…GGVV), 400 to 420 (LALA…GFTL), 422 to 442 (LPGI…NVLI), 469 to 489 (LTIL…LQFG), and 495 to 515 (GFAV…IFVT).

This sequence belongs to the SecD/SecF family. SecD subfamily. In terms of assembly, forms a complex with SecF. Part of the essential Sec protein translocation apparatus which comprises SecA, SecYEG and auxiliary proteins SecDF-YajC and YidC.

The protein localises to the cell inner membrane. Its function is as follows. Part of the Sec protein translocase complex. Interacts with the SecYEG preprotein conducting channel. SecDF uses the proton motive force (PMF) to complete protein translocation after the ATP-dependent function of SecA. The chain is Protein translocase subunit SecD from Syntrophobacter fumaroxidans (strain DSM 10017 / MPOB).